A 277-amino-acid polypeptide reads, in one-letter code: Shikimate dehydrogenase (NADP(+)) (277 aa).

Shikimate contacts are provided by residues 15–17 (SKS) and threonine 64. Catalysis depends on lysine 68, which acts as the Proton acceptor. Shikimate-binding residues include asparagine 89 and aspartate 104. Residues 129–133 (GAGGA), 153–158 (NRTAKR), and methionine 217 each bind NADP(+). Tyrosine 219 provides a ligand contact to shikimate. An NADP(+)-binding site is contributed by glycine 242.

The protein belongs to the shikimate dehydrogenase family. As to quaternary structure, homodimer.

It carries out the reaction shikimate + NADP(+) = 3-dehydroshikimate + NADPH + H(+). It participates in metabolic intermediate biosynthesis; chorismate biosynthesis; chorismate from D-erythrose 4-phosphate and phosphoenolpyruvate: step 4/7. Involved in the biosynthesis of the chorismate, which leads to the biosynthesis of aromatic amino acids. Catalyzes the reversible NADPH linked reduction of 3-dehydroshikimate (DHSA) to yield shikimate (SA). The protein is Shikimate dehydrogenase (NADP(+)) of Hydrogenovibrio crunogenus (strain DSM 25203 / XCL-2) (Thiomicrospira crunogena).